A 1199-amino-acid polypeptide reads, in one-letter code: Major DNA-binding protein (1199 aa).

The segment at 289–314 (SGTTTARGARRNDVNSTSKPSPSGGF) is disordered. A zinc finger lies at 497 to 510 (CSLCEKHTRPVCAH). Short sequence motifs (required for filament formation) lie at residues 841 to 842 (FW) and 1146 to 1148 (FNF). Positions 1172 to 1199 (LKRPPEDDELFDLSGIPIKHGNITMEMI) are required for nuclear localization.

This sequence belongs to the herpesviridae major DNA-binding protein family. Homooligomers. Forms double-helical filaments necessary for the formation of replication compartments within the host nucleus. Interacts with the origin-binding protein. Interacts with the helicase primase complex; this interaction stimulates primer synthesis activity of the helicase-primase complex. Interacts with the DNA polymerase. Interacts with the alkaline exonuclease; this interaction increases its nuclease processivity.

The protein resides in the host nucleus. Its function is as follows. Plays several crucial roles in viral infection. Participates in the opening of the viral DNA origin to initiate replication by interacting with the origin-binding protein. May disrupt loops, hairpins and other secondary structures present on ssDNA to reduce and eliminate pausing of viral DNA polymerase at specific sites during elongation. Promotes viral DNA recombination by performing strand-transfer, characterized by the ability to transfer a DNA strand from a linear duplex to a complementary single-stranded DNA circle. Can also catalyze the renaturation of complementary single strands. Additionally, reorganizes the host cell nucleus, leading to the formation of prereplicative sites and replication compartments. This process is driven by the protein which can form double-helical filaments in the absence of DNA. This Varicella-zoster virus (strain Oka vaccine) (HHV-3) protein is Major DNA-binding protein.